A 216-amino-acid polypeptide reads, in one-letter code: Probable nicotinate-nucleotide adenylyltransferase (216 aa).

The protein belongs to the NadD family.

It catalyses the reaction nicotinate beta-D-ribonucleotide + ATP + H(+) = deamido-NAD(+) + diphosphate. It participates in cofactor biosynthesis; NAD(+) biosynthesis; deamido-NAD(+) from nicotinate D-ribonucleotide: step 1/1. Functionally, catalyzes the reversible adenylation of nicotinate mononucleotide (NaMN) to nicotinic acid adenine dinucleotide (NaAD). This is Probable nicotinate-nucleotide adenylyltransferase from Pelobacter propionicus (strain DSM 2379 / NBRC 103807 / OttBd1).